The following is a 289-amino-acid chain: 33 kDa chaperonin (289 aa).

2 cysteine pairs are disulfide-bonded: Cys229/Cys231 and Cys262/Cys265.

Belongs to the HSP33 family. Post-translationally, under oxidizing conditions two disulfide bonds are formed involving the reactive cysteines. Under reducing conditions zinc is bound to the reactive cysteines and the protein is inactive.

The protein localises to the cytoplasm. Its function is as follows. Redox regulated molecular chaperone. Protects both thermally unfolding and oxidatively damaged proteins from irreversible aggregation. Plays an important role in the bacterial defense system toward oxidative stress. In Pectobacterium atrosepticum (strain SCRI 1043 / ATCC BAA-672) (Erwinia carotovora subsp. atroseptica), this protein is 33 kDa chaperonin.